The chain runs to 439 residues: Structure-specific endonuclease subunit SLX1 homolog (439 aa).

Disordered regions lie at residues 1–28 and 117–140; these read METFILSSDSDDDCPPPPKRRSIEGVPK and DDDDDDEKESSTEHADDDLNLRAL. A compositionally biased stretch (basic and acidic residues) spans 125 to 136; it reads ESSTEHADDDLN. Residues 166–253 enclose the GIY-YIG domain; the sequence is EFYGVYCLIS…PAVSKSLKEK (88 aa). The segment at 335–390 adopts an SLX1-type zinc-finger fold; sequence CRLCGKDIEKLWGLVRCISQSCHSHFHSKCLAEHGLKNKNEYADQIYPLKSNCPIC.

This sequence belongs to the SLX1 family. In terms of assembly, forms a heterodimer with him-18/slx-4. Requires a divalent metal cation as cofactor.

The protein resides in the nucleus. Catalytic subunit of a heterodimeric structure-specific endonuclease that resolves DNA secondary structures generated during DNA repair and recombination. Has endonuclease activity towards branched DNA substrates, introducing single-strand cuts in duplex DNA close to junctions with ss-DNA (Potential). Has a preference for replication forks over 5' flap structures or Holliday junctions and shows much lower activity toward 3' flap structures. Required for proper crossover distribution through inhibition of crossover formation at the central region of chromosomes. The sequence is that of Structure-specific endonuclease subunit SLX1 homolog from Caenorhabditis briggsae.